The sequence spans 87 residues: Small ribosomal subunit protein uS17 (87 aa).

Belongs to the universal ribosomal protein uS17 family. Part of the 30S ribosomal subunit.

Its function is as follows. One of the primary rRNA binding proteins, it binds specifically to the 5'-end of 16S ribosomal RNA. In Chromobacterium violaceum (strain ATCC 12472 / DSM 30191 / JCM 1249 / CCUG 213 / NBRC 12614 / NCIMB 9131 / NCTC 9757 / MK), this protein is Small ribosomal subunit protein uS17.